We begin with the raw amino-acid sequence, 208 residues long: Probable Brix domain-containing ribosomal biogenesis protein (208 aa).

The 196-residue stretch at 1-196 (MMLITTSHRP…IWIMEDGRRW (196 aa)) folds into the Brix domain.

Its function is as follows. Probably involved in the biogenesis of the ribosome. In Thermococcus kodakarensis (strain ATCC BAA-918 / JCM 12380 / KOD1) (Pyrococcus kodakaraensis (strain KOD1)), this protein is Probable Brix domain-containing ribosomal biogenesis protein.